Consider the following 177-residue polypeptide: Large ribosomal subunit protein uL6 (177 aa).

Belongs to the universal ribosomal protein uL6 family. Part of the 50S ribosomal subunit.

This protein binds to the 23S rRNA, and is important in its secondary structure. It is located near the subunit interface in the base of the L7/L12 stalk, and near the tRNA binding site of the peptidyltransferase center. The protein is Large ribosomal subunit protein uL6 of Pseudomonas entomophila (strain L48).